A 177-amino-acid chain; its full sequence is Large ribosomal subunit protein uL6 (177 aa).

Belongs to the universal ribosomal protein uL6 family. Part of the 50S ribosomal subunit.

Its function is as follows. This protein binds to the 23S rRNA, and is important in its secondary structure. It is located near the subunit interface in the base of the L7/L12 stalk, and near the tRNA binding site of the peptidyltransferase center. This is Large ribosomal subunit protein uL6 from Salmonella arizonae (strain ATCC BAA-731 / CDC346-86 / RSK2980).